Reading from the N-terminus, the 503-residue chain is Cytochrome P450 3A15 (503 aa).

Residue C442 participates in heme binding.

It belongs to the cytochrome P450 family. Heme is required as a cofactor.

The protein resides in the endoplasmic reticulum membrane. Its subcellular location is the microsome membrane. The catalysed reaction is an organic molecule + reduced [NADPH--hemoprotein reductase] + O2 = an alcohol + oxidized [NADPH--hemoprotein reductase] + H2O + H(+). In terms of biological role, cytochromes P450 are a group of heme-thiolate monooxygenases. In liver microsomes, this enzyme is involved in an NADPH-dependent electron transport pathway. It oxidizes a variety of structurally unrelated compounds, including steroids, fatty acids, and xenobiotics. In Cavia porcellus (Guinea pig), this protein is Cytochrome P450 3A15 (CYP3A15).